The primary structure comprises 45 residues: MKSQAFFLLFLVVLLLATTQSEAFLGALLSKIFGKRSLRDVDTMK.

Residues 1 to 23 (MKSQAFFLLFLVVLLLATTQSEA) form the signal peptide. Residue phenylalanine 33 is modified to Phenylalanine amide. The propeptide occupies 37 to 45 (SLRDVDTMK).

This sequence belongs to the non-disulfide-bridged peptide (NDBP) superfamily. Short antimicrobial peptide (group 4) family. Expressed by the venom gland.

It localises to the secreted. The protein localises to the target cell membrane. Amphipathic peptide that shows antibacterial activities. The chain is Amphipathic peptide Hj0164 from Hottentotta judaicus (Black scorpion).